The chain runs to 326 residues: Biotin synthase (326 aa).

One can recognise a Radical SAM core domain in the interval 47–274 (NEVQVSSLLS…ASRVRLSAGR (228 aa)). [4Fe-4S] cluster-binding residues include Cys-62, Cys-66, and Cys-69. [2Fe-2S] cluster is bound by residues Cys-106, Cys-137, Cys-197, and Arg-269.

The protein belongs to the radical SAM superfamily. Biotin synthase family. In terms of assembly, homodimer. The cofactor is [4Fe-4S] cluster. It depends on [2Fe-2S] cluster as a cofactor.

The catalysed reaction is (4R,5S)-dethiobiotin + (sulfur carrier)-SH + 2 reduced [2Fe-2S]-[ferredoxin] + 2 S-adenosyl-L-methionine = (sulfur carrier)-H + biotin + 2 5'-deoxyadenosine + 2 L-methionine + 2 oxidized [2Fe-2S]-[ferredoxin]. Its pathway is cofactor biosynthesis; biotin biosynthesis; biotin from 7,8-diaminononanoate: step 2/2. Its function is as follows. Catalyzes the conversion of dethiobiotin (DTB) to biotin by the insertion of a sulfur atom into dethiobiotin via a radical-based mechanism. The protein is Biotin synthase of Methylococcus capsulatus (strain ATCC 33009 / NCIMB 11132 / Bath).